We begin with the raw amino-acid sequence, 373 residues long: Enoyl-[acyl-carrier-protein] reductase, mitochondrial (373 aa).

Residues 1-53 (MWVCSTLWRVRTPARQWRGLLPASGCHGPAASSYSASAEPARVRALVYGHHGD) constitute a mitochondrion transit peptide. Lys-61 is subject to N6-acetyllysine; alternate. Lys-61 bears the N6-succinyllysine; alternate mark. The active-site Proton donor is the Tyr-94. Residues Asn-167, 193–196 (NSGV), and 216–218 (RDR) each bind NADP(+). An N6-acetyllysine; alternate mark is found at Lys-252 and Lys-267. N6-succinyllysine; alternate occurs at positions 252 and 267. NADP(+) contacts are provided by residues 285-288 (YGGM) and 310-312 (FWL). The residue at position 316 (Lys-316) is an N6-succinyllysine. Lys-368 is an NADP(+) binding site.

Belongs to the zinc-containing alcohol dehydrogenase family. Quinone oxidoreductase subfamily. Homodimer. Isoform 2 interacts with PPARA in the nucleus and increases its activity. Highly expressed in skeletal and heart muscle. Expressed at lower level in placenta, liver, kidney and pancreas. Weakly or not expressed in lung.

The protein resides in the mitochondrion. It localises to the cytoplasm. The protein localises to the nucleus. The enzyme catalyses a 2,3-saturated acyl-[ACP] + NADP(+) = a (2E)-enoyl-[ACP] + NADPH + H(+). It carries out the reaction (2E)-butenoyl-[ACP] + NADPH + H(+) = butanoyl-[ACP] + NADP(+). The catalysed reaction is (2E)-hexenoyl-[ACP] + NADPH + H(+) = hexanoyl-[ACP] + NADP(+). It catalyses the reaction (2E)-octenoyl-[ACP] + NADPH + H(+) = octanoyl-[ACP] + NADP(+). The enzyme catalyses (2E)-decenoyl-[ACP] + NADPH + H(+) = decanoyl-[ACP] + NADP(+). It carries out the reaction (2E)-dodecenoyl-[ACP] + NADPH + H(+) = dodecanoyl-[ACP] + NADP(+). The catalysed reaction is (2E)-tetradecenoyl-[ACP] + NADPH + H(+) = tetradecanoyl-[ACP] + NADP(+). It catalyses the reaction (2E)-hexadecenoyl-[ACP] + NADPH + H(+) = hexadecanoyl-[ACP] + NADP(+). In terms of biological role, catalyzes the NADPH-dependent reduction of trans-2-enoyl thioesters in mitochondrial fatty acid synthesis (fatty acid synthesis type II). Fatty acid chain elongation in mitochondria uses acyl carrier protein (ACP) as an acyl group carrier, but the enzyme accepts both ACP and CoA thioesters as substrates in vitro. Displays a preference for medium-chain over short- and long-chain substrates. May provide the octanoyl chain used for lipoic acid biosynthesis, regulating protein lipoylation and mitochondrial respiratory activity particularly in Purkinje cells. Involved in iron homeostasis; affecting Fe-S cluster assembly and ceramide metabolism. Required for proper morphology and bioenergetic functions of mitochondria. Required for maintenance of neurons. This is Enoyl-[acyl-carrier-protein] reductase, mitochondrial (MECR) from Homo sapiens (Human).